A 200-amino-acid polypeptide reads, in one-letter code: Polyadenylate-binding protein 1-like 2 (200 aa).

2 consecutive RRM domains span residues 2-80 (ASLY…WSQR) and 90-166 (GNVF…RFKS). The segment at 170 to 200 (REAERGAWARQSTSADVKDFEEDTDEEATLR) is disordered. The span at 188–200 (DFEEDTDEEATLR) shows a compositional bias: acidic residues.

The chain is Polyadenylate-binding protein 1-like 2 (PABPC1L2A) from Homo sapiens (Human).